The sequence spans 132 residues: Evasin P985 (132 aa).

Residues Met1 to Thr24 form the signal peptide. 6 N-linked (GlcNAc...) asparagine glycosylation sites follow: Asn45, Asn69, Asn74, Asn103, Asn111, and Asn117. Intrachain disulfides connect Cys48/Cys70, Cys66/Cys109, Cys83/Cys114, and Cys104/Cys123.

It is found in the secreted. Functionally, salivary chemokine-binding protein which binds to host chemokine CCL5. The polypeptide is Evasin P985 (Amblyomma parvum (South American tick)).